Consider the following 411-residue polypeptide: Secretion apparatus protein BsaZ (411 aa).

4 consecutive transmembrane segments (helical) span residues 28–48 (IVALIVIATGALAAPALVDLT), 80–100 (IAAPFVLLCAAAGALPSLVQS), 137–157 (ALLYVGVFALTVRVFAGLYHA), and 175–195 (IVLTVRLVLLFLLCALPVLIL). The interval 341-411 (AANRGGPPPE…APARTGDQNA (71 aa)) is disordered. The span at 370–404 (DACADNAFPDDAPPGAAAPNAGSPDGPAPDGGAPA) shows a compositional bias: low complexity.

This sequence belongs to the type III secretion exporter family.

It localises to the cell membrane. Part of the bsa type III secretion system, is involved in the intracellular replication of invading bacteria inside the host cell. Probably necessary for the lysis of the vacuole membrane and escape into the host cell cytoplasm. The polypeptide is Secretion apparatus protein BsaZ (bsaZ) (Burkholderia pseudomallei (strain 1710b)).